A 374-amino-acid polypeptide reads, in one-letter code: Pulmonary surfactant-associated protein D (374 aa).

Positions 1–19 (MLPFLSMLVLLVQPLGNLG) are cleaved as a signal peptide. Cys34 and Cys39 each carry S-nitrosocysteine. The interval 38 to 222 (MCSPTENGLP…GIKGESGLPD (185 aa)) is disordered. Residues 45–221 (GLPGRDGRDG…RGIKGESGLP (177 aa)) enclose the Collagen-like domain. Residues 49-64 (RDGRDGREGPRGEKGD) are compositionally biased toward basic and acidic residues. The span at 70–79 (PMGLSGLQGP) shows a compositional bias: low complexity. Residue Asn89 is glycosylated (N-linked (GlcNAc...) asparagine). 2 stretches are compositionally biased toward low complexity: residues 137–149 (KGEA…VGAP) and 169–200 (APGV…RGPP). A compositionally biased stretch (basic and acidic residues) spans 203 to 215 (KGDRGVPGDRGIK). Residues 222–253 (DSAALRQQMEALKGKLQRLEVAFSHYQKAALF) are a coiled coil. The C-type lectin domain maps to 259-374 (VGDKIFRTAD…GEQRLVICEF (116 aa)). Cystine bridges form between Cys280/Cys372 and Cys350/Cys364.

Belongs to the SFTPD family. Oligomeric complex of 4 set of homotrimers. S-nitrosylation at Cys-34 and Cys-39 alters the quaternary structure which results in a pro-inflammatory chemoattractive signaling activity with macrophages.

The protein resides in the secreted. It localises to the extracellular space. It is found in the extracellular matrix. Its subcellular location is the surface film. In terms of biological role, contributes to the lung's defense against inhaled microorganisms, organic antigens and toxins. Interacts with compounds such as bacterial lipopolysaccharides, oligosaccharides and fatty acids and modulates leukocyte action in immune response. May participate in the extracellular reorganization or turnover of pulmonary surfactant. Binds strongly maltose residues and to a lesser extent other alpha-glucosyl moieties. The sequence is that of Pulmonary surfactant-associated protein D (Sftpd) from Mus musculus (Mouse).